Here is a 167-residue protein sequence, read N- to C-terminus: Lipoprotein signal peptidase (167 aa).

The next 3 helical transmembrane spans lie at phenylalanine 8–methionine 28, phenylalanine 61–tryptophan 81, and phenylalanine 93–tyrosine 113. Catalysis depends on residues aspartate 117 and aspartate 136. The chain crosses the membrane as a helical span at residues isoleucine 126–isoleucine 146.

It belongs to the peptidase A8 family.

It is found in the cell inner membrane. The catalysed reaction is Release of signal peptides from bacterial membrane prolipoproteins. Hydrolyzes -Xaa-Yaa-Zaa-|-(S,diacylglyceryl)Cys-, in which Xaa is hydrophobic (preferably Leu), and Yaa (Ala or Ser) and Zaa (Gly or Ala) have small, neutral side chains.. It functions in the pathway protein modification; lipoprotein biosynthesis (signal peptide cleavage). Its function is as follows. This protein specifically catalyzes the removal of signal peptides from prolipoproteins. The protein is Lipoprotein signal peptidase of Bartonella quintana (strain Toulouse) (Rochalimaea quintana).